Reading from the N-terminus, the 164-residue chain is Ferritin heavy chain (164 aa).

The 141-residue stretch at A1 to G141 folds into the Ferritin-like diiron domain. E9, E44, H47, E89, and Q123 together coordinate Fe cation. 2 positions are modified to phosphoserine: S160 and S164.

It belongs to the ferritin family. As to quaternary structure, oligomer of 24 subunits. There are two types of subunits: L (light) chain and H (heavy) chain. The major chain can be light or heavy, depending on the species and tissue type. The functional molecule forms a roughly spherical shell with a diameter of 12 nm and contains a central cavity into which the insoluble mineral iron core is deposited. Interacts with NCOA4; NCOA4 promotes targeting of the iron-binding ferritin complex to autolysosomes following starvation or iron depletion.

It is found in the cytoplasm. The protein resides in the lysosome. Its subcellular location is the cytoplasmic vesicle. The protein localises to the autophagosome. The catalysed reaction is 4 Fe(2+) + O2 + 4 H(+) = 4 Fe(3+) + 2 H2O. Functionally, stores iron in a soluble, non-toxic, readily available form. Important for iron homeostasis. Has ferroxidase activity. Iron is taken up in the ferrous form and deposited as ferric hydroxides after oxidation. Also plays a role in delivery of iron to cells. Mediates iron uptake in capsule cells of the developing kidney. Delivery to lysosomes is mediated by the cargo receptor NCOA4 for autophagic degradation and release of iron. This chain is Ferritin heavy chain (FTH1), found in Oryctolagus cuniculus (Rabbit).